Here is a 428-residue protein sequence, read N- to C-terminus: RUN domain-containing protein 3A (428 aa).

An RUN domain is found at 52 to 182 (DDSSEEFINF…IDFSFCLKGE (131 aa)). A coiled-coil region spans residues 237-314 (ESWRNKCRKM…ELQEQLTSLI (78 aa)). A disordered region spans residues 349–375 (HRGSFPSPEPHISLTTGSQRTERKQNG).

The protein belongs to the RUNDC3 family.

This chain is RUN domain-containing protein 3A (rundc3a), found in Danio rerio (Zebrafish).